The following is a 185-amino-acid chain: Elongation factor P (185 aa).

Belongs to the elongation factor P family.

It localises to the cytoplasm. It participates in protein biosynthesis; polypeptide chain elongation. Its function is as follows. Involved in peptide bond synthesis. Stimulates efficient translation and peptide-bond synthesis on native or reconstituted 70S ribosomes in vitro. Probably functions indirectly by altering the affinity of the ribosome for aminoacyl-tRNA, thus increasing their reactivity as acceptors for peptidyl transferase. This Anoxybacillus flavithermus (strain DSM 21510 / WK1) protein is Elongation factor P.